Here is a 245-residue protein sequence, read N- to C-terminus: MKIRLLKPLLIVGVLLMIWQMVATLGSFPHYIFPSPQAVRQQLFTHAELLWQHTQVTLLEICLGLLLGFLFGLISALLLSFSRQISAVLLPILVISQAIPVFAIAPLLVLWFGYGMASKIVMSVLIIYFPVTAACYDGLRNTPQAWLDLAKTFNISPLRLLLKVRLPAALPAFASGLRIAVSVAPIGAVVGEWVGSSEGLGYLMIHANARMQVDLMFAALLILVSISLCLYFSIDWLLHRFIWSV.

A run of 6 helical transmembrane segments spans residues 9–29 (LLIVGVLLMIWQMVATLGSFP), 61–81 (ICLGLLLGFLFGLISALLLSF), 92–112 (ILVISQAIPVFAIAPLLVLWF), 115–135 (GMASKIVMSVLIIYFPVTAAC), 170–190 (LPAFASGLRIAVSVAPIGAVV), and 217–237 (FAALLILVSISLCLYFSIDWL). The ABC transmembrane type-1 domain occupies 50 to 234 (LWQHTQVTLL…SISLCLYFSI (185 aa)).

The protein belongs to the binding-protein-dependent transport system permease family. CysTW subfamily.

The protein localises to the cell inner membrane. Probably part of a binding-protein-dependent transport system. Probably responsible for the translocation of the substrate across the membrane. In Haemophilus influenzae (strain ATCC 51907 / DSM 11121 / KW20 / Rd), this protein is Probable ABC transporter permease protein HI_0355.